A 432-amino-acid chain; its full sequence is Glutamyl-tRNA reductase (432 aa).

Residues 49–52 (TCNR), serine 107, 112–114 (ETQ), and glutamine 118 each bind substrate. Cysteine 50 acts as the Nucleophile in catalysis. Position 186–191 (186–191 (GAGEMG)) interacts with NADP(+).

The protein belongs to the glutamyl-tRNA reductase family. In terms of assembly, homodimer.

It carries out the reaction (S)-4-amino-5-oxopentanoate + tRNA(Glu) + NADP(+) = L-glutamyl-tRNA(Glu) + NADPH + H(+). The protein operates within porphyrin-containing compound metabolism; protoporphyrin-IX biosynthesis; 5-aminolevulinate from L-glutamyl-tRNA(Glu): step 1/2. Functionally, catalyzes the NADPH-dependent reduction of glutamyl-tRNA(Glu) to glutamate 1-semialdehyde (GSA). The polypeptide is Glutamyl-tRNA reductase (Campylobacter jejuni subsp. doylei (strain ATCC BAA-1458 / RM4099 / 269.97)).